A 136-amino-acid polypeptide reads, in one-letter code: Small ribosomal subunit protein uS9 (136 aa).

Basic and acidic residues predominate over residues 103 to 116 (PLKTEGHLSRDPRA). The tract at residues 103-136 (PLKTEGHLSRDPRAKERRKYGLKKARKAPQFSKR) is disordered. Residues 117–136 (KERRKYGLKKARKAPQFSKR) show a composition bias toward basic residues.

This sequence belongs to the universal ribosomal protein uS9 family.

The chain is Small ribosomal subunit protein uS9 (rpsI) from Prochlorococcus marinus (strain SARG / CCMP1375 / SS120).